The following is a 343-amino-acid chain: Cilia- and flagella-associated protein 36 (343 aa).

2 positions are modified to phosphoserine: Ser-85 and Ser-147. A coiled-coil region spans residues 147–181 (SDLEQEEMKILREVLRKSKEEYDQEEERKRKKQSS). Residues 165–191 (KEEYDQEEERKRKKQSSEGKMEEPPIY) form a disordered region. A Phosphoserine modification is found at Ser-201. The interval 286 to 323 (SMRKDMRAKQIQNTEQKGKPTREAEEMTEKPEMTAEEK) is disordered. Over residues 301 to 323 (QKGKPTREAEEMTEKPEMTAEEK) the composition is skewed to basic and acidic residues.

The protein belongs to the CFAP36 family. As to quaternary structure, interacts with ARL3. As to expression, widely expressed (at protein level).

The protein localises to the nucleus. It localises to the cytoplasm. The protein resides in the cell projection. It is found in the cilium. Its subcellular location is the flagellum. Its function is as follows. May act as an effector for ARL3. This chain is Cilia- and flagella-associated protein 36, found in Rattus norvegicus (Rat).